We begin with the raw amino-acid sequence, 354 residues long: Neutral protease 2 homolog AN7962 (354 aa).

The first 19 residues, 1 to 19 (MKFIAPIALLGMFQAASAS), serve as a signal peptide directing secretion. Residues 20–178 (PVDIKTSNAG…GAQLSKLSKR (159 aa)) constitute a propeptide that is removed on maturation. Cystine bridges form between C184/C255 and C262/C280. Residue H305 coordinates Zn(2+). The active site involves E306. Zn(2+) is bound by residues H309 and D320.

The protein belongs to the peptidase M35 family. Zn(2+) is required as a cofactor.

The protein resides in the secreted. It carries out the reaction Preferential cleavage of bonds with hydrophobic residues in P1'. Also 3-Asn-|-Gln-4 and 8-Gly-|-Ser-9 bonds in insulin B chain.. Its function is as follows. Secreted metalloproteinase that allows assimilation of proteinaceous substrates. Shows high activities on basic nuclear substrates such as histone and protamine. The protein is Neutral protease 2 homolog AN7962 of Emericella nidulans (strain FGSC A4 / ATCC 38163 / CBS 112.46 / NRRL 194 / M139) (Aspergillus nidulans).